The primary structure comprises 216 residues: ATP phosphoribosyltransferase (216 aa).

Belongs to the ATP phosphoribosyltransferase family. Short subfamily. As to quaternary structure, heteromultimer composed of HisG and HisZ subunits.

It localises to the cytoplasm. It carries out the reaction 1-(5-phospho-beta-D-ribosyl)-ATP + diphosphate = 5-phospho-alpha-D-ribose 1-diphosphate + ATP. It participates in amino-acid biosynthesis; L-histidine biosynthesis; L-histidine from 5-phospho-alpha-D-ribose 1-diphosphate: step 1/9. In terms of biological role, catalyzes the condensation of ATP and 5-phosphoribose 1-diphosphate to form N'-(5'-phosphoribosyl)-ATP (PR-ATP). Has a crucial role in the pathway because the rate of histidine biosynthesis seems to be controlled primarily by regulation of HisG enzymatic activity. This Chromohalobacter salexigens (strain ATCC BAA-138 / DSM 3043 / CIP 106854 / NCIMB 13768 / 1H11) protein is ATP phosphoribosyltransferase.